The primary structure comprises 260 residues: 3-methyl-2-oxobutanoate hydroxymethyltransferase (260 aa).

Residues aspartate 42 and aspartate 81 each coordinate Mg(2+). Residues 42–43 (DS), aspartate 81, and lysine 109 contribute to the 3-methyl-2-oxobutanoate site. Residue glutamate 111 coordinates Mg(2+). The active-site Proton acceptor is the glutamate 178.

The protein belongs to the PanB family. As to quaternary structure, homodecamer; pentamer of dimers. The cofactor is Mg(2+).

The protein localises to the cytoplasm. It catalyses the reaction 3-methyl-2-oxobutanoate + (6R)-5,10-methylene-5,6,7,8-tetrahydrofolate + H2O = 2-dehydropantoate + (6S)-5,6,7,8-tetrahydrofolate. It functions in the pathway cofactor biosynthesis; (R)-pantothenate biosynthesis; (R)-pantoate from 3-methyl-2-oxobutanoate: step 1/2. Functionally, catalyzes the reversible reaction in which hydroxymethyl group from 5,10-methylenetetrahydrofolate is transferred onto alpha-ketoisovalerate to form ketopantoate. This Ruthia magnifica subsp. Calyptogena magnifica protein is 3-methyl-2-oxobutanoate hydroxymethyltransferase.